The following is a 63-amino-acid chain: Lantipeptide Flvbeta.a (63 aa).

Positions 1 to 28 (MSEKNMEKAGVVKADELDEMIDETTGGA) are cleaved as a propeptide — cleaved by FlvT. Residues T30, T33, T38, and T39 each carry the 2,3-didehydrobutyrine; by FlvM2 modification. The lanthionine (Ser-Cys); by FlvM2 cross-link spans 43–49 (SKGLQNC). T54 and T55 each carry 2,3-didehydrobutyrine; by FlvM2.

Post-translationally, maturation of FlvA2 peptides involves the enzymatic conversion of Thr, and Ser into dehydrated AA and the formation of thioether bonds with cysteines. Modifications are processed by the flavecin synthetase FlvM2. This is followed by membrane translocation and cleavage of the modified precursor. In terms of processing, contains DL-lanthionine, when coepressed in E.coli with the flavecin synthetase FlvM2.

It localises to the secreted. Lanthionine-containing peptide that does probably not show antibacterial activity, since its analog [+3]Flvbeta.a does not show antibacterial activity against M.luteus. Also does not show antibiotic activity when tested with [Del2]Flvalpha.a, an analog of Flvalpha.a, which is encoded by the same operon than Flvbeta.a. The bactericidal activity of lantibiotics is based on depolarization of energized bacterial cytoplasmic membranes, initiated by the formation of aqueous transmembrane pores. The protein is Lantipeptide Flvbeta.a of Ruminococcus flavefaciens.